The primary structure comprises 456 residues: uncharacterized protein (456 aa).

Residues 2–60 (AMRKGKEYELNIEEIEFPSMGIAYHEGLKVYVKHGIPGQKVLARITTKKKDHAKGKIIE) enclose the TRAM domain. [4Fe-4S] cluster-binding residues include Cys73, Cys79, Cys82, and Cys162. 4 residues coordinate S-adenosyl-L-methionine: Gln288, Tyr317, Glu338, and Asp383. The active-site Nucleophile is Cys410.

Belongs to the class I-like SAM-binding methyltransferase superfamily. RNA M5U methyltransferase family.

This is an uncharacterized protein from Clostridium tetani (strain Massachusetts / E88).